Consider the following 602-residue polypeptide: Sulfite reductase [NADPH] flavoprotein alpha-component (602 aa).

Positions 68 to 206 (ITIISASQTG…NYIQWSEELL (139 aa)) constitute a Flavodoxin-like domain. Residues 74-79 (SQTGNA), 121-124 (STQG), and 157-166 (LGDVSYNLFC) contribute to the FMN site. Positions 237 to 451 (YKPAVATVLL…VEEKSNFRLP (215 aa)) constitute an FAD-binding FR-type domain. FAD-binding positions include Thr325, Lys359, 389–392 (RLYS), 407–409 (TVG), and 422–425 (GGSS). NADP(+) is bound by residues 522-523 (SR), 528-532 (KIYVQ), and Asp564. Position 602 (Tyr602) interacts with FAD.

It belongs to the NADPH-dependent sulphite reductase flavoprotein subunit CysJ family. This sequence in the N-terminal section; belongs to the flavodoxin family. In the C-terminal section; belongs to the flavoprotein pyridine nucleotide cytochrome reductase family. Alpha(8)-beta(8). The alpha component is a flavoprotein, the beta component is a hemoprotein. It depends on FAD as a cofactor. FMN serves as cofactor.

It carries out the reaction hydrogen sulfide + 3 NADP(+) + 3 H2O = sulfite + 3 NADPH + 4 H(+). It participates in sulfur metabolism; hydrogen sulfide biosynthesis; hydrogen sulfide from sulfite (NADPH route): step 1/1. In terms of biological role, component of the sulfite reductase complex that catalyzes the 6-electron reduction of sulfite to sulfide. This is one of several activities required for the biosynthesis of L-cysteine from sulfate. The flavoprotein component catalyzes the electron flow from NADPH -&gt; FAD -&gt; FMN to the hemoprotein component. This chain is Sulfite reductase [NADPH] flavoprotein alpha-component, found in Buchnera aphidicola subsp. Schizaphis graminum (strain Sg).